We begin with the raw amino-acid sequence, 320 residues long: MVVSELAARLNCAEYKNWVKAGHCLLLLRSCLQGFIDREVLSFHRGLLAAVPGLGPHATCRGGSRCSPRARQFQPQCQVCAEWKHEILRHHINRNGDVHWGNCKPGLWPKDPWEVAKAFMPRGLADKRGPEECDAVALLSLINSCDHFVVDRKKVTEVIKCRNEIMHSSEMKVSSTWLRDFQIKIQNFLNEFKNIPEIVAVYSRIEQLLTSDWAVHIPEEDERDGCEFEIGSYLSVSQIHEIEIELLKEKLQEMYLQAAEEEMLPEEISNQLDVVKGFLGSNTDLRNGLTEDLQKLESLHLQHQKQTSKDAGRQTPERKA.

Residue arginine 61 is modified to Omega-N-methylarginine. A disordered region spans residues 299–320 (LHLQHQKQTSKDAGRQTPERKA). Positions 307–320 (TSKDAGRQTPERKA) are enriched in basic and acidic residues. Threonine 315 carries the phosphothreonine modification.

This is an uncharacterized protein from Mus musculus (Mouse).